The following is a 377-amino-acid chain: 3-dehydroquinate synthase (377 aa).

NAD(+) is bound by residues 113 to 117 (GVIGD), 137 to 138 (TT), Lys-150, and Lys-159. 3 residues coordinate Zn(2+): Glu-192, His-254, and His-273.

This sequence belongs to the sugar phosphate cyclases superfamily. Dehydroquinate synthase family. It depends on Co(2+) as a cofactor. The cofactor is Zn(2+). NAD(+) serves as cofactor.

The protein resides in the cytoplasm. It carries out the reaction 7-phospho-2-dehydro-3-deoxy-D-arabino-heptonate = 3-dehydroquinate + phosphate. It participates in metabolic intermediate biosynthesis; chorismate biosynthesis; chorismate from D-erythrose 4-phosphate and phosphoenolpyruvate: step 2/7. In terms of biological role, catalyzes the conversion of 3-deoxy-D-arabino-heptulosonate 7-phosphate (DAHP) to dehydroquinate (DHQ). The polypeptide is 3-dehydroquinate synthase (Bartonella bacilliformis (strain ATCC 35685 / KC583 / Herrer 020/F12,63)).